A 161-amino-acid chain; its full sequence is S-ribosylhomocysteine lyase (161 aa).

The Fe cation site is built by His-53, His-57, and Cys-124.

This sequence belongs to the LuxS family. Homodimer. The cofactor is Fe cation.

It carries out the reaction S-(5-deoxy-D-ribos-5-yl)-L-homocysteine = (S)-4,5-dihydroxypentane-2,3-dione + L-homocysteine. In terms of biological role, involved in the synthesis of autoinducer 2 (AI-2) which is secreted by bacteria and is used to communicate both the cell density and the metabolic potential of the environment. The regulation of gene expression in response to changes in cell density is called quorum sensing. Catalyzes the transformation of S-ribosylhomocysteine (RHC) to homocysteine (HC) and 4,5-dihydroxy-2,3-pentadione (DPD). This chain is S-ribosylhomocysteine lyase, found in Phocaeicola vulgatus (strain ATCC 8482 / DSM 1447 / JCM 5826 / CCUG 4940 / NBRC 14291 / NCTC 11154) (Bacteroides vulgatus).